A 195-amino-acid chain; its full sequence is Interferon omega-1 (195 aa).

Residues 1–23 (MAFVLSLLMALVLVSYGPGGSLG) form the signal peptide. 2 disulfide bridges follow: Cys-24–Cys-122 and Cys-52–Cys-162.

It belongs to the alpha/beta interferon family.

The protein resides in the secreted. This is Interferon omega-1 (IFNW1) from Bos taurus (Bovine).